We begin with the raw amino-acid sequence, 270 residues long: Glucosamine-6-phosphate deaminase (270 aa).

The active-site Proton acceptor; for enolization step is D72. Catalysis depends on D141, which acts as the For ring-opening step. The active-site Proton acceptor; for ring-opening step is the H143. The active-site For ring-opening step is the E148.

It belongs to the glucosamine/galactosamine-6-phosphate isomerase family. NagB subfamily. As to quaternary structure, homohexamer.

The enzyme catalyses alpha-D-glucosamine 6-phosphate + H2O = beta-D-fructose 6-phosphate + NH4(+). It participates in amino-sugar metabolism; N-acetylneuraminate degradation; D-fructose 6-phosphate from N-acetylneuraminate: step 5/5. With respect to regulation, allosterically activated by N-acetylglucosamine 6-phosphate (GlcNAc6P). Functionally, catalyzes the reversible isomerization-deamination of glucosamine 6-phosphate (GlcN6P) to form fructose 6-phosphate (Fru6P) and ammonium ion. In Photorhabdus laumondii subsp. laumondii (strain DSM 15139 / CIP 105565 / TT01) (Photorhabdus luminescens subsp. laumondii), this protein is Glucosamine-6-phosphate deaminase.